The sequence spans 346 residues: Dehydrogenase azaJ (346 aa).

43–48 (VDYATQ) lines the NADP(+) pocket. 133 to 140 (LAFSTAIV) lines the substrate pocket. Residues 170 to 173 (ATSV), 193 to 196 (SPHN), tyrosine 211, and 251 to 252 (LN) each bind NADP(+). 269-273 (APPNV) serves as a coordination point for substrate. Position 336-337 (336-337 (VS)) interacts with NADP(+).

The protein belongs to the zinc-containing alcohol dehydrogenase family.

It participates in secondary metabolite biosynthesis. Dehydrogenase; part of the gene cluster that mediates the biosynthesis of azaphilones, a class of fungal metabolites characterized by a highly oxygenated pyrano-quinone bicyclic core and exhibiting a broad range of bioactivities. In the first step, the non-reducing polyketide synthase azaA forms the hexaketide precursor from successive condensations of five malonyl-CoA units, presumably with a simple acetyl-CoA starter unit. The reactive polyketide chain then undergoes a PT-mediated C2-C7 cyclization to afford the aromatic ring and is eventually released as an aldehyde through the R-domain. The putative ketoreductase azaE is proposed to catalyze the reduction of the terminal ketone resulting in the early culture product FK17-P2a. The monooxygenase azaH was demonstrated to be the only enzyme required to convert FK17-P2a to azanigerone E. AzaH first hydroxylates the benzaldehyde intermediate FK17-P2a at C4, which triggers the formation of the pyran-ring to afford azanigerone E. In parallel, the 2,4-dimethylhexanoyl chain is synthesized by the HR-PKS azaB and is proposed to be transferred to the C4-hydroxyl of azanigerone E by the acyltransferase azaD directly from the ACP domain of azaB. Alternatively, the 2,4-dimethyl-hexanoyl chain may be offloaded from the HR-PKS as a carboxylic acid and converted to an acyl-CoA by azaF. The resulting acyl-CoA molecule could then be taken up as a substrate by AzaD to form azanigerone B. To yield the carboxylic acid substituent in azanigerone A, the hydroxypropyl side chain of azanigerone B would need to undergo a C-C oxidative cleavage catalyzed by cytochrome P450 AzaI. AzaI is proposed to act on a vicinal diol that leads to a C-C bond scission either through an alkoxyradical intermediate or a peroxy complex. In the biosynthesis of azanigerone A, azanigerone B first undergoes hydroxylation at C10, possibly catalyzed by one of the two FAD-dependent monooxygenases encoded in the cluster, azaG or azaL, resulting in the vicinal diol azanigerone C. Oxidative cleavage of azanigerone C by azaI would yield the corresponding aldehyde derivative of azanigerone A. Finally, the dehydrogenase azaJ is proposed to convert the aldehyde functional group into the carboxylic acid, completing the conversion from azanigerone B to azanigerone A. Alternatively, the oxidation of aldehyde to carboxylic acid may be catalyzed by the same P450 enzyme azaI via consecutive oxidation or by endogenous alcohol dehydrogenase. The polypeptide is Dehydrogenase azaJ (Aspergillus niger (strain ATCC 1015 / CBS 113.46 / FGSC A1144 / LSHB Ac4 / NCTC 3858a / NRRL 328 / USDA 3528.7)).